A 120-amino-acid polypeptide reads, in one-letter code: MFLLTGYEYFLGFLLIAAAVPVLALVTNLIVAPKGRAGERRLTYESGMEPIGGAWIQFNIRYYMFALVFVIFDVETVFLYPWAVAFNRLGLLAFIEALIFIAILVIALAYAWRKGALEWS.

3 helical membrane passes run 10-30 (FLGFLLIAAAVPVLALVTNLI), 64-84 (MFALVFVIFDVETVFLYPWAV), and 89-109 (LGLLAFIEALIFIAILVIALA).

This sequence belongs to the complex I subunit 3 family. In terms of assembly, NDH-1 can be composed of about 15 different subunits; different subcomplexes with different compositions have been identified which probably have different functions.

It is found in the cellular thylakoid membrane. It carries out the reaction a plastoquinone + NADH + (n+1) H(+)(in) = a plastoquinol + NAD(+) + n H(+)(out). The catalysed reaction is a plastoquinone + NADPH + (n+1) H(+)(in) = a plastoquinol + NADP(+) + n H(+)(out). Functionally, NDH-1 shuttles electrons from an unknown electron donor, via FMN and iron-sulfur (Fe-S) centers, to quinones in the respiratory and/or the photosynthetic chain. The immediate electron acceptor for the enzyme in this species is believed to be plastoquinone. Couples the redox reaction to proton translocation, and thus conserves the redox energy in a proton gradient. Cyanobacterial NDH-1 also plays a role in inorganic carbon-concentration. This Prochlorococcus marinus (strain MIT 9301) protein is NAD(P)H-quinone oxidoreductase subunit 3.